Reading from the N-terminus, the 237-residue chain is Ribosomal RNA small subunit methyltransferase G (237 aa).

S-adenosyl-L-methionine is bound by residues glycine 78, phenylalanine 83, 129–130 (AE), and arginine 148.

It belongs to the methyltransferase superfamily. RNA methyltransferase RsmG family.

It localises to the cytoplasm. In terms of biological role, specifically methylates the N7 position of a guanine in 16S rRNA. The polypeptide is Ribosomal RNA small subunit methyltransferase G (Streptococcus equi subsp. zooepidemicus (strain MGCS10565)).